A 442-amino-acid chain; its full sequence is Glutamyl-tRNA reductase (442 aa).

Substrate is bound by residues 49 to 52 (TCNR), Ser-109, 114 to 116 (EGQ), and Gln-120. The active-site Nucleophile is the Cys-50. 198–203 (GAGRMA) provides a ligand contact to NADP(+). The segment at 420-442 (MAAAQRLFDLPGDDADRDRSDAK) is disordered. Basic and acidic residues predominate over residues 433–442 (DADRDRSDAK).

The protein belongs to the glutamyl-tRNA reductase family. As to quaternary structure, homodimer.

It carries out the reaction (S)-4-amino-5-oxopentanoate + tRNA(Glu) + NADP(+) = L-glutamyl-tRNA(Glu) + NADPH + H(+). The protein operates within porphyrin-containing compound metabolism; protoporphyrin-IX biosynthesis; 5-aminolevulinate from L-glutamyl-tRNA(Glu): step 1/2. It participates in porphyrin-containing compound metabolism; chlorophyll biosynthesis. Catalyzes the NADPH-dependent reduction of glutamyl-tRNA(Glu) to glutamate 1-semialdehyde (GSA). The chain is Glutamyl-tRNA reductase from Synechococcus sp. (strain RCC307).